The chain runs to 254 residues: 3-beta-hydroxysteroid dehydrogenase (254 aa).

NAD(+) is bound by residues 12 to 40 (VTGG…SDIN) and Asp61. Ser139 is a substrate binding site. The Proton acceptor role is filled by Tyr152. Lys156 contributes to the NAD(+) binding site.

It belongs to the short-chain dehydrogenases/reductases (SDR) family. In terms of assembly, homotetramer.

The enzyme catalyses testosterone + NAD(+) = androst-4-ene-3,17-dione + NADH + H(+). It carries out the reaction testosterone + NADP(+) = androst-4-ene-3,17-dione + NADPH + H(+). The chain is 3-beta-hydroxysteroid dehydrogenase from Comamonas testosteroni (Pseudomonas testosteroni).